The following is a 337-amino-acid chain: NADH-quinone oxidoreductase subunit H (337 aa).

8 helical membrane-spanning segments follow: residues 13-33 (IIIVLQCLAIILPMLGAIAYL), 82-102 (AVFIIAPLMTFILALIAWAVI), 115-135 (VGVLYLFAVSGLGVYGIIMAG), 154-174 (MVSYEVAMGLIIIAVILSAGS), 187-207 (GVWYFIPHFPMFVMFLVSILA), 248-268 (ILMSGITAILFLGGWLPPVDI), 274-294 (IPGIIWFFLKIALILFVFLWV), and 313-333 (VFLPGSLIWVVLTAGFLVTFD).

Belongs to the complex I subunit 1 family. As to quaternary structure, NDH-1 is composed of 14 different subunits. Subunits NuoA, H, J, K, L, M, N constitute the membrane sector of the complex.

It localises to the cell inner membrane. It carries out the reaction a quinone + NADH + 5 H(+)(in) = a quinol + NAD(+) + 4 H(+)(out). Functionally, NDH-1 shuttles electrons from NADH, via FMN and iron-sulfur (Fe-S) centers, to quinones in the respiratory chain. The immediate electron acceptor for the enzyme in this species is believed to be ubiquinone. Couples the redox reaction to proton translocation (for every two electrons transferred, four hydrogen ions are translocated across the cytoplasmic membrane), and thus conserves the redox energy in a proton gradient. This subunit may bind ubiquinone. This is NADH-quinone oxidoreductase subunit H from Rhodospirillum rubrum (strain ATCC 11170 / ATH 1.1.1 / DSM 467 / LMG 4362 / NCIMB 8255 / S1).